The sequence spans 385 residues: 1-deoxy-D-xylulose 5-phosphate reductoisomerase (385 aa).

6 residues coordinate NADPH: Thr-10, Gly-11, Ser-12, Ile-13, Lys-37, and Asn-124. Lys-125 contributes to the 1-deoxy-D-xylulose 5-phosphate binding site. Residue Glu-126 participates in NADPH binding. A Mn(2+)-binding site is contributed by Asp-150. The 1-deoxy-D-xylulose 5-phosphate site is built by Ser-151, Glu-152, Ser-176, and His-199. Position 152 (Glu-152) interacts with Mn(2+). Gly-205 serves as a coordination point for NADPH. 1-deoxy-D-xylulose 5-phosphate is bound by residues Ser-212, Asn-217, Lys-218, and Glu-221. Glu-221 lines the Mn(2+) pocket.

Belongs to the DXR family. Mg(2+) serves as cofactor. Requires Mn(2+) as cofactor.

The enzyme catalyses 2-C-methyl-D-erythritol 4-phosphate + NADP(+) = 1-deoxy-D-xylulose 5-phosphate + NADPH + H(+). Its pathway is isoprenoid biosynthesis; isopentenyl diphosphate biosynthesis via DXP pathway; isopentenyl diphosphate from 1-deoxy-D-xylulose 5-phosphate: step 1/6. Catalyzes the NADPH-dependent rearrangement and reduction of 1-deoxy-D-xylulose-5-phosphate (DXP) to 2-C-methyl-D-erythritol 4-phosphate (MEP). In Clostridium botulinum (strain Kyoto / Type A2), this protein is 1-deoxy-D-xylulose 5-phosphate reductoisomerase.